The primary structure comprises 227 residues: LysM and putative peptidoglycan-binding domain-containing protein 1 (227 aa).

Pro residues predominate over residues 1 to 11 (MASPSRQPPPG). Residues 1–20 (MASPSRQPPPGGSGLLHGSR) form a disordered region. Residues serine 23 and serine 33 each carry the phosphoserine modification. Residues 40–84 (LEHQLEPGDTLAGLALKYGVTMEQIKRANRLYTNDSIFLKKTLYI) enclose the LysM domain. The interval 95–150 (NGLDSEEEKDGEEEVRPSNDEVWPHSTERKKQETGAGRANGEVFPTPGQETPTPIH) is disordered. The segment covering 98-107 (DSEEEKDGEE) has biased composition (acidic residues). The residue at position 99 (serine 99) is a Phosphoserine. The span at 108–127 (EVRPSNDEVWPHSTERKKQE) shows a compositional bias: basic and acidic residues. Serine 166, serine 181, serine 194, and serine 212 each carry phosphoserine. The segment at 172 to 196 (AAQKLKKGESGVPGEDAGLHLSSPR) is disordered.

The polypeptide is LysM and putative peptidoglycan-binding domain-containing protein 1 (LYSMD1) (Macaca fascicularis (Crab-eating macaque)).